Here is an 85-residue protein sequence, read N- to C-terminus: MKVTLIAILTCAAVLVLHTTAAEELEAESQLMEVGMPDTELAAVDEERLFECSVSCEIEKEGNKDCKKKKCKGGWKCKFNMCVKV.

The first 22 residues, 1–22 (MKVTLIAILTCAAVLVLHTTAA), serve as a signal peptide directing secretion. Positions 23–48 (EELEAESQLMEVGMPDTELAAVDEER) are excised as a propeptide. Disulfide bonds link C52–C66, C56–C77, and C71–C82.

It belongs to the neurotoxin 12 (Hwtx-2) family. 02 (Hwtx-2) subfamily. As to quaternary structure, monomer. In terms of tissue distribution, expressed by the venom gland.

It is found in the secreted. In terms of biological role, neurotoxin active on both insects and mammals. In Cyriopagopus hainanus (Chinese bird spider), this protein is U4-theraphotoxin-Hhn1a.